We begin with the raw amino-acid sequence, 235 residues long: Bypass of stop codon protein 2 (235 aa).

The helical transmembrane segment at 68–88 threads the bilayer; the sequence is FGIFQLMCSLGVIVLLLPIII. A Phosphoserine modification is found at Ser-177.

Its subcellular location is the lipid droplet. It is found in the membrane. In Saccharomyces cerevisiae (strain ATCC 204508 / S288c) (Baker's yeast), this protein is Bypass of stop codon protein 2 (BSC2).